The sequence spans 459 residues: Argininosuccinate lyase (459 aa).

Belongs to the lyase 1 family. Argininosuccinate lyase subfamily.

The protein resides in the cytoplasm. The catalysed reaction is 2-(N(omega)-L-arginino)succinate = fumarate + L-arginine. It functions in the pathway amino-acid biosynthesis; L-arginine biosynthesis; L-arginine from L-ornithine and carbamoyl phosphate: step 3/3. The protein is Argininosuccinate lyase of Lactococcus lactis subsp. lactis (strain IL1403) (Streptococcus lactis).